A 332-amino-acid polypeptide reads, in one-letter code: Cysteine and histidine-rich domain-containing protein 1 (332 aa).

The residue at position 2 (Ala-2) is an N-acetylalanine. The interaction with PPP5C stretch occupies residues 2 to 77 (ALLCYNRGCG…KPPESVKPEV (76 aa)). 6 residues coordinate Zn(2+): Cys-5, Cys-10, Cys-24, His-27, Cys-42, and Cys-43. CHORD domains lie at 5–64 (CYNR…KGRH) and 157–216 (CKNG…KGKH). Thr-47 carries the phosphothreonine modification. At Ser-51 the chain carries Phosphoserine. Zn(2+) is bound by residues Cys-59, His-64, Cys-157, Cys-162, Cys-176, His-179, Cys-194, Cys-195, Cys-211, and His-216. The tract at residues 62–81 (GRHNSEKPPESVKPEVKTTE) is disordered. Positions 64 to 81 (HNSEKPPESVKPEVKTTE) are enriched in basic and acidic residues. The interaction with HSP90AA1 and HSP90AB1 stretch occupies residues 65-316 (NSEKPPESVK…AEPMQWASLE (252 aa)). The 90-residue stretch at 227-316 (VVPCRHDWHQ…AEPMQWASLE (90 aa)) folds into the CS domain.

Interacts with HSP90AA1, HSP90AB1, PPP5C, ROCK1 and ROCK2.

Its function is as follows. Regulates centrosome duplication, probably by inhibiting the kinase activity of ROCK2. Proposed to act as co-chaperone for HSP90. May play a role in the regulation of NOD1 via a HSP90 chaperone complex. In vitro, has intrinsic chaperone activity. This function may be achieved by inhibiting association of ROCK2 with NPM1. Plays a role in ensuring the localization of the tyrosine kinase receptor EGFR to the plasma membrane, and thus ensures the subsequent regulation of EGFR activity and EGF-induced actin cytoskeleton remodeling. Involved in stress response. Prevents tumorigenesis. This is Cysteine and histidine-rich domain-containing protein 1 (CHORDC1) from Pongo abelii (Sumatran orangutan).